An 874-amino-acid polypeptide reads, in one-letter code: Alanine--tRNA ligase (874 aa).

Residues histidine 562, histidine 566, cysteine 664, and histidine 668 each contribute to the Zn(2+) site.

It belongs to the class-II aminoacyl-tRNA synthetase family. Zn(2+) is required as a cofactor.

It is found in the cytoplasm. The enzyme catalyses tRNA(Ala) + L-alanine + ATP = L-alanyl-tRNA(Ala) + AMP + diphosphate. Catalyzes the attachment of alanine to tRNA(Ala) in a two-step reaction: alanine is first activated by ATP to form Ala-AMP and then transferred to the acceptor end of tRNA(Ala). Also edits incorrectly charged Ser-tRNA(Ala) and Gly-tRNA(Ala) via its editing domain. The polypeptide is Alanine--tRNA ligase (Shewanella putrefaciens (strain CN-32 / ATCC BAA-453)).